The sequence spans 199 residues: Small ribosomal subunit protein mS38 (199 aa).

It belongs to the mitochondrion-specific ribosomal protein mS38 family. As to quaternary structure, component of the mitochondrial small ribosomal subunit (mt-SSU). Mature mammalian 55S mitochondrial ribosomes consist of a small (28S) and a large (39S) subunit. The 28S small subunit contains a 12S ribosomal RNA (12S mt-rRNA) and 30 different proteins. The 39S large subunit contains a 16S rRNA (16S mt-rRNA), a copy of mitochondrial valine transfer RNA (mt-tRNA(Val)), which plays an integral structural role, and 52 different proteins. Interacts with Aurora-A. As to expression, ubiquitously expressed and especially highly expressed in heart, skeletal muscle and testis.

The protein localises to the mitochondrion matrix. It is found in the nucleus. Functionally, may act as a negative regulator of Aurora-A kinase, by down-regulation through proteasome-dependent degradation. This Homo sapiens (Human) protein is Small ribosomal subunit protein mS38 (AURKAIP1).